Reading from the N-terminus, the 169-residue chain is Lutropin/choriogonadotropin subunit beta (169 aa).

The first 20 residues, 1 to 20 (MEMLQGLLLWMLLSVGGVWA), serve as a signal peptide directing secretion. Intrachain disulfides connect Cys29–Cys77, Cys43–Cys92, Cys46–Cys130, Cys54–Cys108, Cys58–Cys110, and Cys113–Cys120. N-linked (GlcNAc...) asparagine glycosylation occurs at Asn33. The segment at 131-169 (APQTSSSCKDPPSQPLTSTSTPTPGASRRSSHPLPINTS) is disordered. Low complexity predominate over residues 145–158 (PLTSTSTPTPGASR).

The protein belongs to the glycoprotein hormones subunit beta family. As to quaternary structure, heterodimer of a common alpha chain and a unique beta chain which confers biological specificity to thyrotropin, lutropin, follitropin and gonadotropin.

Its subcellular location is the secreted. In terms of biological role, promotes spermatogenesis and ovulation by stimulating the testes and ovaries to synthesize steroids. The chain is Lutropin/choriogonadotropin subunit beta (LHB) from Equus asinus (Donkey).